We begin with the raw amino-acid sequence, 455 residues long: Kynurenine 3-monooxygenase (455 aa).

A run of 2 helical transmembrane segments spans residues 393–416 (WLFRLFPTIWVPLYNSVSFTSMPY) and 429–453 (LLWRTFLGFIVVGLGVTGSAIYWQR).

This sequence belongs to the aromatic-ring hydroxylase family. KMO subfamily. FAD serves as cofactor.

The protein localises to the mitochondrion. It localises to the membrane. The enzyme catalyses L-kynurenine + NADPH + O2 + H(+) = 3-hydroxy-L-kynurenine + NADP(+) + H2O. The protein operates within cofactor biosynthesis; NAD(+) biosynthesis; quinolinate from L-kynurenine: step 1/3. Functionally, catalyzes the hydroxylation of L-kynurenine (L-Kyn) to form 3-hydroxy-L-kynurenine (L-3OHKyn). Required for synthesis of quinolinic acid. The polypeptide is Kynurenine 3-monooxygenase (Drosophila willistoni (Fruit fly)).